Reading from the N-terminus, the 148-residue chain is Small ribosomal subunit protein uS9 (148 aa).

Belongs to the universal ribosomal protein uS9 family.

This is Small ribosomal subunit protein uS9 (RpS16) from Drosophila melanogaster (Fruit fly).